We begin with the raw amino-acid sequence, 63 residues long: Large ribosomal subunit protein bL28 (63 aa).

The protein belongs to the bacterial ribosomal protein bL28 family.

The chain is Large ribosomal subunit protein bL28 from Heliobacterium modesticaldum (strain ATCC 51547 / Ice1).